Consider the following 643-residue polypeptide: MTADSLRERLKSQNADYSLLNTSQASNRSAFEDKMSPVCKSRYVNDNQRLEQSRITMLETRIKWHIILLTGFSIDHLVLNSSFTSAILLFGFFPSYVNSSISLFVIIYSLIMIASYAFEIKFPNALKQLVYNKVQSKPPRPESSKSTPIVPDAQNVLDTSVQSNDLSWVDAHRFGTPSFKSSQLQQSPSPNKKSPSYSQVMSNVSVSDTSGILEDTKGGWKSPAVYGKSNESIHTRKQLDVLLRSNQDEIPVDMNTSTFSSIWSVFGLGRSGQISANNTWQVSEEITNDGNTNSSYRMKIGKNGRTEVKMLRRGKDGEIEEEDEDELVRLHKILNAAKLTPEGKTGILKRSNSIDRAGIRSRRRSHSSPERSTSTENEIRYQTGELLTEDQQKRAEFMTRAWIRNTILEPLAEHIDKVNKILDKEHANPPLRVGVSSVDALKLAAIERDSLKSSDLPFLLPFLSVHPNQKYLISRIKELCATQFMDAYKWNSGGSEPTDDNDQMTRLVRREWNDSLPTDAVLVFDIFLAYMDAQLNSNCLVGDSRLDQPFTSRFCVKNAQKPSSAQRTPFSFYLHMVTKSPPHAEFVHIDENGYAIKCNVLRQSPNLFRAIAQFIHFVKHENHGYLDQTSIGPSGINMTYVLA.

The span at 179–199 shows a compositional bias: low complexity; it reads FKSSQLQQSPSPNKKSPSYSQ. Disordered regions lie at residues 179–200 and 349–377; these read FKSS…YSQV and KRSN…STEN.

This is an uncharacterized protein from Caenorhabditis elegans.